The primary structure comprises 445 residues: DNA repair protein RadA (445 aa).

Residues 10–27 form a C4-type zinc finger; that stretch reads CSNCANISHKWSGQCFDC. 90–97 provides a ligand contact to ATP; that stretch reads GEPGIGKS. Positions 249–253 match the RadA KNRFG motif motif; sequence KNRFG. The tract at residues 348–445 is lon-protease-like; sequence EIYLSIAGGL…HLQDLKEIIK (98 aa).

It belongs to the RecA family. RadA subfamily.

In terms of biological role, DNA-dependent ATPase involved in processing of recombination intermediates, plays a role in repairing DNA breaks. Stimulates the branch migration of RecA-mediated strand transfer reactions, allowing the 3' invading strand to extend heteroduplex DNA faster. Binds ssDNA in the presence of ADP but not other nucleotides, has ATPase activity that is stimulated by ssDNA and various branched DNA structures, but inhibited by SSB. Does not have RecA's homology-searching function. This is DNA repair protein RadA from Rickettsia typhi (strain ATCC VR-144 / Wilmington).